Here is a 327-residue protein sequence, read N- to C-terminus: Lactosylceramide 4-alpha-galactosyltransferase (327 aa).

The short motif at 166–168 (DTD) is the DXD motif element.

It belongs to the glycosyltransferase 32 family.

Its subcellular location is the golgi apparatus membrane. The enzyme catalyses a beta-D-Gal-(1-&gt;4)-beta-D-Glc-(1&lt;-&gt;1)-Cer(d18:1(4E)) + UDP-alpha-D-galactose = a globoside Gb3Cer (d18:1(4E)) + UDP + H(+). It carries out the reaction a beta-D-Gal-(1&lt;-&gt;1')-ceramide + UDP-alpha-D-galactose = alpha-D-Gal-(1-&gt;4)-beta-D-Gal-(1&lt;-&gt;1')-Cer + UDP + H(+). It functions in the pathway glycolipid biosynthesis. Functionally, catalyzes the transfer of galactose from UDP-alpha-D-galactose to lactosylceramide/beta-D-galactosyl-(1-&gt;4)-beta-D-glucosyl-(1&lt;-&gt;1)-ceramide(d18:1(4E)) to produce globotriaosylceramide/globoside Gb3Cer (d18:1(4E)). Also able to transfer galactose to galactosylceramide/beta-D-Gal-(1&lt;-&gt;1')-Cer. Globoside Gb3Cer is a glycosphingolipid of the globo serie, one of the major types of neutral root structures of glycosphingolipids, that constitute a significant portion of mammalian cell membranes. The chain is Lactosylceramide 4-alpha-galactosyltransferase (A4GALT) from Gorilla gorilla gorilla (Western lowland gorilla).